Reading from the N-terminus, the 462-residue chain is A-type ATP synthase subunit B (462 aa).

This sequence belongs to the ATPase alpha/beta chains family. In terms of assembly, has multiple subunits with at least A(3), B(3), C, D, E, F, H, I and proteolipid K(x).

The protein localises to the cell membrane. Its function is as follows. Component of the A-type ATP synthase that produces ATP from ADP in the presence of a proton gradient across the membrane. The B chain is a regulatory subunit. In Methanobrevibacter smithii (strain ATCC 35061 / DSM 861 / OCM 144 / PS), this protein is A-type ATP synthase subunit B.